We begin with the raw amino-acid sequence, 466 residues long: Putative ABC transporter ATP-binding protein MG065 (466 aa).

The 231-residue stretch at 233–463 (IELKNVYKYI…NLNPKQVEEI (231 aa)) folds into the ABC transporter domain. 269–276 (GPSGSGKT) serves as a coordination point for ATP.

This sequence belongs to the ABC transporter superfamily.

The sequence is that of Putative ABC transporter ATP-binding protein MG065 from Mycoplasma genitalium (strain ATCC 33530 / DSM 19775 / NCTC 10195 / G37) (Mycoplasmoides genitalium).